The chain runs to 749 residues: Taperin (749 aa).

Positions 144 to 348 (PAAPCRRGSP…IRPSSKPDME (205 aa)) are disordered. Composition is skewed to polar residues over residues 169–179 (SAATRTPTNRS), 230–239 (LQKTGSNSFT), and 250–266 (VNRS…SPTG). A Phosphoserine modification is found at Ser274. Over residues 323–335 (QRQWVSSATSAND) the composition is skewed to polar residues. Over residues 337–347 (FEIRPSSKPDM) the composition is skewed to basic and acidic residues. 3 positions are modified to phosphoserine: Ser401, Ser457, and Ser501. Disordered stretches follow at residues 502–586 (EEEA…TTLE), 636–673 (FEYP…SEKP), and 730–749 (LTPA…ALYF). Composition is skewed to polar residues over residues 534 to 544 (ELLNRGSNTFT) and 558 to 570 (HLSQ…QQGA). Acidic residues predominate over residues 647 to 668 (EEAEEEEEEEGEEDGEEEEVGP).

The protein belongs to the taperin family. Interacts with GRXCR2; the interaction restricts TPRN to the stereocilum basal region. Interacts with actin ACTB; the interaction may stabilize stereocilia. Interacts with CLIC5. Interacts with PTPRQ. TPRN, CLIC5 and PTPQR form concentric rings at the base of stereocilia and may form a complex. Interacts with phosphatase PPP1CA; the interaction results in inhibition of PPP1CA phosphatase activity. Interacts with DNA damage response proteins XRCC6/KU70, XRCC5/KU80, PARP1, TOP1 and TOP2A; these interactions recruit TPRN to sites of DNA damage where it may play a role in DNA repair. In the organ of Corti, expressed in the inner ear hair cell stereocilia and the supporting cells (at protein level). Expressed in the sensory epithelia of the organ of Corti and vestibular end organs and, to a lesser extent, in Reisner's membrane and the spiral ligament (at protein level). At postnatal day 2, expression is detected in cochlea, liver, brain, kidney, heart and lung.

It localises to the cell projection. It is found in the stereocilium. Its subcellular location is the microvillus. The protein localises to the nucleus. The protein resides in the nucleoplasm. It localises to the cytoplasm. Functionally, essential for hearing. Required for maintenance of stereocilia on both inner and outer hair cells. Necessary for the integrity of the stereociliary rootlet. May act as an actin cytoskeleton regulator involved in the regulation of actin dynamics at the pointed end in hair cells. Forms rings at the base of stereocilia and binds actin filaments in the stereocilia which may stabilize the stereocilia. Acts as a strong inhibitor of PPP1CA phosphatase activity. Recruited to sites of DNA damage and may play a role in DNA damage repair. The polypeptide is Taperin (Tprn) (Mus musculus (Mouse)).